A 285-amino-acid chain; its full sequence is Probable endonuclease 4 (285 aa).

Positions 69, 109, 145, 179, 182, 216, 229, 231, and 261 each coordinate Zn(2+).

Belongs to the AP endonuclease 2 family. Zn(2+) is required as a cofactor.

The catalysed reaction is Endonucleolytic cleavage to 5'-phosphooligonucleotide end-products.. Functionally, endonuclease IV plays a role in DNA repair. It cleaves phosphodiester bonds at apurinic or apyrimidinic (AP) sites, generating a 3'-hydroxyl group and a 5'-terminal sugar phosphate. The sequence is that of Probable endonuclease 4 from Enterobacter sp. (strain 638).